Reading from the N-terminus, the 807-residue chain is 1-phosphatidylinositol 4,5-bisphosphate phosphodiesterase delta-4 (807 aa).

Residues 16-124 (LLMQEGTMMR…WMRGLQLLVD (109 aa)) form the PH domain. Residues 26–53 (KVRTKSWKKLRYFRLQNDGMTVWHGSQP) are substrate binding. EF-hand domains follow at residues 134–169 (QMDQ…MNVE), 170–205 (MDEE…LTKR), and 203–237 (TKRT…EQKE). Ca(2+) is bound by residues D147, N149, D151, R153, E158, D183, S187, D189, and E194. Residues 213 to 243 (EDFSSDKQKLTLLEFVDFLRKEQKEKDHAPD) carry the GBA motif. A PI-PLC X-box domain is found at 290–435 (QDMTQPLSHY…LRGKILVKGK (146 aa)). H305 is an active-site residue. N306, E335, and D337 together coordinate Ca(2+). Residue H350 is part of the active site. E384 contacts Ca(2+). K433 and K435 together coordinate substrate. The segment at 442–490 (VDKEEEEEEEEEELEKDEGPDLDPASPELDTQPQPETQGQAAGNKKERK) is disordered. Residues 443–462 (DKEEEEEEEEEELEKDEGPD) show a composition bias toward acidic residues. Over residues 470-482 (LDTQPQPETQGQA) the composition is skewed to polar residues. The region spanning 538–654 (LSALVVYLRT…GYVLKPEFLR (117 aa)) is the PI-PLC Y-box domain. S567 and R594 together coordinate substrate. Positions 654-781 (RDTQSSFNPE…QGYRHVSLLS (128 aa)) constitute a C2 domain. The Ca(2+) site is built by D697, N721, D750, and Y751. A PDZ-binding motif is present at residues 776–779 (HVSL).

Interacts with GRIP1. Interacts (via GBA motif) with guanine nucleotide-binding protein G(i) alpha subunit GNAI3 (inactive GDP-bound form)l low-affinity interaction. Ca(2+) serves as cofactor.

Its subcellular location is the membrane. It is found in the nucleus. The protein resides in the cytoplasm. It localises to the endoplasmic reticulum. The catalysed reaction is a 1,2-diacyl-sn-glycero-3-phospho-(1D-myo-inositol-4,5-bisphosphate) + H2O = 1D-myo-inositol 1,4,5-trisphosphate + a 1,2-diacyl-sn-glycerol + H(+). It carries out the reaction a 1,2-diacyl-sn-glycero-3-phospho-(1D-myo-inositol) + H2O = 1D-myo-inositol 1-phosphate + a 1,2-diacyl-sn-glycerol + H(+). Its function is as follows. Hydrolyzes the phosphatidylinositol 4,5-bisphosphate (PIP2) to generate 2 second messenger molecules diacylglycerol (DAG) and inositol 1,4,5-trisphosphate (IP3). DAG mediates the activation of protein kinase C (PKC), while IP3 releases Ca(2+) from intracellular stores. Required for acrosome reaction in sperm during fertilization, probably by acting as an important enzyme for intracellular Ca(2+) mobilization in the zona pellucida-induced acrosome reaction. May play a role in cell growth. Modulates the liver regeneration in cooperation with nuclear PKC. Overexpression up-regulates the Erk signaling pathway and proliferation. This is 1-phosphatidylinositol 4,5-bisphosphate phosphodiesterase delta-4 from Mus musculus (Mouse).